A 520-amino-acid polypeptide reads, in one-letter code: Lysine--tRNA ligase (520 aa).

The tract at residues 1 to 21 (MSDHLIPSIPTPAAAPAAAPA) is disordered. Residues 12 to 21 (PAAAPAAAPA) are compositionally biased toward low complexity. 2 residues coordinate Mg(2+): E430 and E437.

It belongs to the class-II aminoacyl-tRNA synthetase family. In terms of assembly, homodimer. Mg(2+) is required as a cofactor.

The protein localises to the cytoplasm. It carries out the reaction tRNA(Lys) + L-lysine + ATP = L-lysyl-tRNA(Lys) + AMP + diphosphate. This chain is Lysine--tRNA ligase, found in Variovorax paradoxus (strain S110).